The sequence spans 467 residues: MAKSPFLELSYDILLEISTYLDYKDIVHLSETCKSLSYVFDDKTIWHRFCARVQGLTNVVPVVDDNYKRPYAVWKDRGYAYSWGQQIRNYLGRVVNTNQYPRDRPGALTGKDVRSTIQVQVGGYGMYLLNENGNLYVTGVPNNVGPELMRDLEPIVKIHAGREFCLALGETGHLYQVSLKTRICLTDEQNMLSAYRGRIANFKSGWDSHSAYVPGIGFLVWHTGRESEAQLFQPEASMKEFVLNDYVHCAGFLVYTVASPQKKGAVFRLDLDQATQHTLGRELKRFASHDPHQGWHLAGSFETFTCLSDDGNTVYMGHANTKQVDDDPVIHDFLQNRGIKQLAHGDHHHLYLTSDHSIWSWGVELRYCGCLGLGSLHLQEQTSDPSIVSDPRTARNIVSIPHQIHFSGTCYSVAAGGWQSAALAISESVLPEVNVPPITTFSIIRPSRVPALRFLAAPATRTLERDG.

Residues 3 to 49 enclose the F-box domain; sequence KSPFLELSYDILLEISTYLDYKDIVHLSETCKSLSYVFDDKTIWHRF. RCC1 repeat units follow at residues 77–131, 302–354, and 355–417; these read RGYA…LLNE, ETFT…YLTS, and DHSI…AAGG.

In terms of assembly, interacts with skp1.

It localises to the cytoplasm. It is found in the nucleus. This chain is F-box protein pof9 (pof9), found in Schizosaccharomyces pombe (strain 972 / ATCC 24843) (Fission yeast).